We begin with the raw amino-acid sequence, 78 residues long: Small ribosomal subunit protein bS16c (78 aa).

The protein belongs to the bacterial ribosomal protein bS16 family.

Its subcellular location is the plastid. It is found in the chloroplast. In Gracilaria tenuistipitata var. liui (Red alga), this protein is Small ribosomal subunit protein bS16c.